We begin with the raw amino-acid sequence, 178 residues long: Translation machinery-associated protein 16 (178 aa).

Belongs to the TMA16 family.

Its subcellular location is the nucleus. The sequence is that of Translation machinery-associated protein 16 (TMA16) from Saccharomyces cerevisiae (strain ATCC 204508 / S288c) (Baker's yeast).